The chain runs to 382 residues: Alpha-methylacyl-CoA racemase (382 aa).

Substrate contacts are provided by residues Arg-36 and 55–58 (LDLK). N6-acetyllysine is present on Lys-58. At Lys-87 the chain carries N6-acetyllysine; alternate. At Lys-87 the chain carries N6-succinyllysine; alternate. 121-126 (GHDINY) contributes to the substrate binding site. His-122 functions as the Proton acceptor in the catalytic mechanism. Asp-152 serves as the catalytic Proton donor. The residue at position 268 (Lys-268) is an N6-succinyllysine. A Microbody targeting signal motif is present at residues 380–382 (ASL).

Belongs to the CoA-transferase III family. Monomer.

The protein resides in the peroxisome. The protein localises to the mitochondrion. It carries out the reaction a (2S)-2-methylacyl-CoA = a (2R)-2-methylacyl-CoA. The enzyme catalyses (25R)-3alpha,7alpha,12alpha-trihydroxy-5beta-cholestan-26-oyl-CoA = (25S)-3alpha,7alpha,12alpha-trihydroxy-5beta-cholestan-26-oyl-CoA. It catalyses the reaction (2R,6)-dimethylheptanoyl-CoA = (2S,6)-dimethylheptanoyl-CoA. It functions in the pathway lipid metabolism; bile acid biosynthesis. It participates in lipid metabolism; fatty acid metabolism. Catalyzes the interconversion of (R)- and (S)-stereoisomers of alpha-methyl-branched-chain fatty acyl-CoA esters. Acts only on coenzyme A thioesters, not on free fatty acids, and accepts as substrates a wide range of alpha-methylacyl-CoAs, including pristanoyl-CoA, trihydroxycoprostanoyl-CoA (an intermediate in bile acid synthesis), and arylpropionic acids like the anti-inflammatory drug ibuprofen (2-(4-isobutylphenyl)propionic acid) but neither 3-methyl-branched nor linear-chain acyl-CoAs. This chain is Alpha-methylacyl-CoA racemase (AMACR), found in Homo sapiens (Human).